The following is a 29-amino-acid chain: Cytochrome c oxidase subunit 7A1, mitochondrial (29 aa).

The span at 1–13 shows a compositional bias: basic and acidic residues; the sequence is LENRVAEKQKLFQ. The disordered stretch occupies residues 1–29; sequence LENRVAEKQKLFQEDNGLPVHLKGGATDN.

This sequence belongs to the cytochrome c oxidase VIIa family. Component of the complex IV (CIV, cytochrome c oxidase), a multisubunit enzyme composed of 14 subunits. The complex is composed of a catalytic core of 3 subunits MT-CO1, MT-CO2 and MT-CO3, encoded in the mitochondrial DNA, and 11 supernumerary subunits COX4I1 (or COX4I2), COX5A, COX5B, COX6A2 (or COX6A1), COX6B1 (or COX6B2), COX6C, COX7A1 (or COX7A2), COX7B, COX7C, COX8B and NDUFA4, which are encoded in the nuclear genome. The complex exists as a monomer or a dimer and forms supercomplexes (SCs) in the inner mitochondrial membrane with NADH-ubiquinone oxidoreductase (complex I, CI) and ubiquinol-cytochrome c oxidoreductase (cytochrome b-c1 complex, complex III, CIII), resulting in different assemblies (supercomplex SCI(1)III(2)IV(1) and megacomplex MCI(2)III(2)IV(2)).

It is found in the mitochondrion inner membrane. The protein operates within energy metabolism; oxidative phosphorylation. Its function is as follows. Component of the mitochondrial respiratory complex IV (CIV, also named cytochrome c oxidase complex), the last enzyme in the mitochondrial electron transport chain which drives oxidative phosphorylation. The CIV complex is the component of the respiratory chain that catalyzes the reduction of oxygen to water. Acts as an assembly factor that specifically drives the homodimerization of CIV complexes, mediating the formation of mitochondrial respiratory supercomplexes (respirasomes) containing two CIV: supercomplxes with two molecules of CIV show improved activity. Despite being highly expressed in brown adipose tissue, not required for thermogenesis. The chain is Cytochrome c oxidase subunit 7A1, mitochondrial (COX7A1) from Ovis aries (Sheep).